The chain runs to 85 residues: uncharacterized protein (85 aa).

The next 2 membrane-spanning stretches (helical) occupy residues 13-35 (KWLA…FQPL) and 59-81 (EGIV…HLLL).

It is found in the cell membrane. This is an uncharacterized protein from Archaeoglobus fulgidus (strain ATCC 49558 / DSM 4304 / JCM 9628 / NBRC 100126 / VC-16).